The primary structure comprises 524 residues: Vang-like protein 1 (524 aa).

The segment covering 1–15 (MDTESTYSGYSYYSS) has biased composition (low complexity). Residues 1–85 (MDTESTYSGY…TTAITGTSEH (85 aa)) are disordered. Topologically, residues 1–117 (MDTESTYSGY…KRYLGLTVAS (117 aa)) are cytoplasmic. Residues 73–85 (GETTTAITGTSEH) are compositionally biased toward polar residues. Serine 86 and serine 88 each carry phosphoserine. The chain crosses the membrane as a helical span at residues 118-138 (FLGLLVFLTPIAFILLPPILW). The Extracellular segment spans residues 139 to 151 (RDELEPCGTICEG). A helical transmembrane segment spans residues 152–172 (LFISMAFKLLILLIGTWALFF). Topologically, residues 173 to 182 (RKRRADMPRV) are cytoplasmic. Residues 183 to 203 (FVFRALLLVLIFLFVVSYWLF) form a helical membrane-spanning segment. Residues 204–222 (YGVRILDSRDRNYQGIVQY) are Extracellular-facing. The helical transmembrane segment at 223-243 (AVSLVDALLFIHYLAIVLLEL) threads the bilayer. Topologically, residues 244-524 (RQLQPMFTLQ…VLRLQSETSV (281 aa)) are cytoplasmic.

It belongs to the Vang family. Heterodimer with VANGL2. Interacts through its C-terminal region with the N-terminal half of DVL1, DVL2 and DVL3. The PDZ domain of DVL1, DVL2 and DVL3 is required for the interaction. According to PubMed:11956595, ubiquitously expressed. According to PubMed:12011995, expressed specifically in testis and ovary.

The protein resides in the cell membrane. The protein is Vang-like protein 1 (VANGL1) of Homo sapiens (Human).